The chain runs to 85 residues: U4-theraphotoxin-Hhn1p (85 aa).

An N-terminal signal peptide occupies residues Met1–Ala22. A propeptide spanning residues Glu23 to Arg48 is cleaved from the precursor. Disulfide bonds link Cys52-Cys66, Cys56-Cys77, and Cys71-Cys82.

It belongs to the neurotoxin 12 (Hwtx-2) family. 02 (Hwtx-2) subfamily. As to expression, expressed by the venom gland.

The protein localises to the secreted. Postsynaptic neurotoxin. The chain is U4-theraphotoxin-Hhn1p from Cyriopagopus hainanus (Chinese bird spider).